A 347-amino-acid chain; its full sequence is MTEKTDLKNLTLPALEQFLRGQGKERFRATQVFKWIYQHDARSFQEMTNISKDLRAELEAKAYISNLEPEAVEVGGDGTRKYLFGLEDGNSVESVLIPDEGRNTLCISSQVGCAMGCAFCLTGTFRLTRNLTTAEIVNQIMAVRRDVEIRNIVMMGMGEPLHNLDNVIPAIHIMIDGNGLQLSNRRVTVSTCGLAPEMERLGRELPNVNLAVSLNATTDELRDRIMPINRRYPLKELLSACREFPLPGRRKVTFEYVMLGGLNDTLEDAKRLLRLTSDIPNKVNLIPFNEFQGCEFRSPTRAAIDAFHKYLIDRHVTVITRDSRGSDISAACGQLKGKLDAARQPTE.

Glu-93 functions as the Proton acceptor in the catalytic mechanism. In terms of domain architecture, Radical SAM core spans 99 to 327; it reads DEGRNTLCIS…VITRDSRGSD (229 aa). Cysteines 106 and 332 form a disulfide. Positions 113, 117, and 120 each coordinate [4Fe-4S] cluster. S-adenosyl-L-methionine contacts are provided by residues 158–159, Ser-190, 213–215, and Asn-289; these read GE and SLN. Cys-332 serves as the catalytic S-methylcysteine intermediate.

The protein belongs to the radical SAM superfamily. RlmN family. The cofactor is [4Fe-4S] cluster.

The protein resides in the cytoplasm. It catalyses the reaction adenosine(2503) in 23S rRNA + 2 reduced [2Fe-2S]-[ferredoxin] + 2 S-adenosyl-L-methionine = 2-methyladenosine(2503) in 23S rRNA + 5'-deoxyadenosine + L-methionine + 2 oxidized [2Fe-2S]-[ferredoxin] + S-adenosyl-L-homocysteine. It carries out the reaction adenosine(37) in tRNA + 2 reduced [2Fe-2S]-[ferredoxin] + 2 S-adenosyl-L-methionine = 2-methyladenosine(37) in tRNA + 5'-deoxyadenosine + L-methionine + 2 oxidized [2Fe-2S]-[ferredoxin] + S-adenosyl-L-homocysteine. Functionally, specifically methylates position 2 of adenine 2503 in 23S rRNA and position 2 of adenine 37 in tRNAs. m2A2503 modification seems to play a crucial role in the proofreading step occurring at the peptidyl transferase center and thus would serve to optimize ribosomal fidelity. The sequence is that of Dual-specificity RNA methyltransferase RlmN from Pelobacter propionicus (strain DSM 2379 / NBRC 103807 / OttBd1).